The sequence spans 506 residues: Maturase K (506 aa).

It belongs to the intron maturase 2 family. MatK subfamily.

It localises to the plastid. The protein resides in the chloroplast. Usually encoded in the trnK tRNA gene intron. Probably assists in splicing its own and other chloroplast group II introns. The chain is Maturase K from Cytisus scoparius (Scotch broom).